Reading from the N-terminus, the 174-residue chain is Peptide methionine sulfoxide reductase MsrA (174 aa).

The active site involves cysteine 11.

It belongs to the MsrA Met sulfoxide reductase family.

The enzyme catalyses L-methionyl-[protein] + [thioredoxin]-disulfide + H2O = L-methionyl-(S)-S-oxide-[protein] + [thioredoxin]-dithiol. It carries out the reaction [thioredoxin]-disulfide + L-methionine + H2O = L-methionine (S)-S-oxide + [thioredoxin]-dithiol. Has an important function as a repair enzyme for proteins that have been inactivated by oxidation. Catalyzes the reversible oxidation-reduction of methionine sulfoxide in proteins to methionine. The polypeptide is Peptide methionine sulfoxide reductase MsrA (Pasteurella multocida (strain Pm70)).